We begin with the raw amino-acid sequence, 652 residues long: Acetyl-coenzyme A synthetase (652 aa).

CoA-binding positions include R189 to K192 and S311. Residues G387–P389, D411–T416, D500, and R515 contribute to the ATP site. CoA is bound at residue S523. ATP is bound at residue R526. Mg(2+) is bound by residues V537, H539, and I542. Residue K584 participates in CoA binding. At K609 the chain carries N6-acetyllysine.

It belongs to the ATP-dependent AMP-binding enzyme family. Mg(2+) is required as a cofactor. Post-translationally, acetylated. Deacetylation by the SIR2-homolog deacetylase activates the enzyme.

It carries out the reaction acetate + ATP + CoA = acetyl-CoA + AMP + diphosphate. Functionally, catalyzes the conversion of acetate into acetyl-CoA (AcCoA), an essential intermediate at the junction of anabolic and catabolic pathways. AcsA undergoes a two-step reaction. In the first half reaction, AcsA combines acetate with ATP to form acetyl-adenylate (AcAMP) intermediate. In the second half reaction, it can then transfer the acetyl group from AcAMP to the sulfhydryl group of CoA, forming the product AcCoA. This is Acetyl-coenzyme A synthetase from Bartonella quintana (strain Toulouse) (Rochalimaea quintana).